We begin with the raw amino-acid sequence, 154 residues long: Ribosomal RNA large subunit methyltransferase H (154 aa).

S-adenosyl-L-methionine is bound by residues Gly-103 and 122–127 (FSKLTF).

This sequence belongs to the RNA methyltransferase RlmH family. As to quaternary structure, homodimer.

Its subcellular location is the cytoplasm. It catalyses the reaction pseudouridine(1915) in 23S rRNA + S-adenosyl-L-methionine = N(3)-methylpseudouridine(1915) in 23S rRNA + S-adenosyl-L-homocysteine + H(+). Functionally, specifically methylates the pseudouridine at position 1915 (m3Psi1915) in 23S rRNA. This Caldicellulosiruptor saccharolyticus (strain ATCC 43494 / DSM 8903 / Tp8T 6331) protein is Ribosomal RNA large subunit methyltransferase H.